The following is a 217-amino-acid chain: Ubiquitin-conjugating enzyme E2 1 (217 aa).

Residues 4 to 151 enclose the UBC core domain; sequence NRSRRIAKEL…AREWTSSYAA (148 aa). The active-site Glycyl thioester intermediate is the Cys-89.

It belongs to the ubiquitin-conjugating enzyme family.

It localises to the cytoplasm. It is found in the nucleus. The catalysed reaction is S-ubiquitinyl-[E1 ubiquitin-activating enzyme]-L-cysteine + [E2 ubiquitin-conjugating enzyme]-L-cysteine = [E1 ubiquitin-activating enzyme]-L-cysteine + S-ubiquitinyl-[E2 ubiquitin-conjugating enzyme]-L-cysteine.. Its pathway is protein modification; protein ubiquitination. In terms of biological role, catalyzes the covalent attachment of ubiquitin to other proteins. Functions in degradation of misfolded or regulated proteins localized in the endoplasmic reticulum (ER) lumen or membrane via the ubiquitin-proteasome system. Cognate E2 conjugating enzyme for the HRD1 ubiquitin ligase complex, which is part of the ERAD-L and ERAD-M pathways responsible for the rapid degradation of soluble lumenal and membrane proteins with misfolded lumenal domains (ERAD-L), or ER-membrane proteins with misfolded transmembrane domains (ERAD-M). This chain is Ubiquitin-conjugating enzyme E2 1 (ubc1), found in Schizosaccharomyces pombe (strain 972 / ATCC 24843) (Fission yeast).